Consider the following 562-residue polypeptide: Putative transport protein ETA_21820 (562 aa).

The next 5 membrane-spanning stretches (helical) occupy residues 8 to 28 (LLIGNHILLLFVVLALGLCLG), 32 to 52 (LGSVQLGNSIGVLVVSLLLGQ), 66 to 86 (FMLFIFCVGVEAGPNFFSIFF), 94 to 114 (MLAIVMVSSAMVLALGLGKLF), and 158 to 178 (HLSLGYALTYLVGLVSLIFGA). 2 RCK C-terminal domains span residues 202-288 (LDPD…SFRN) and 290-373 (KEVF…RIGF). The next 6 helical transmembrane spans lie at 383 to 403 (LLAFCAFFILGLMIGMITFQF), 406 to 426 (FNFGIGNAAGLLFAGIMLGFL), 440 to 460 (ALTMVKEFGLMVFMAGVGLSA), 473 to 493 (LLMLGAGLIVSLVPVVICFLF), 503 to 523 (ALLFGAIMGARTCAPAMEIIS), and 540 to 560 (AIANVLLTLAGTLIVIIWPIL).

The protein belongs to the AAE transporter (TC 2.A.81) family. YbjL subfamily.

The protein localises to the cell membrane. This chain is Putative transport protein ETA_21820, found in Erwinia tasmaniensis (strain DSM 17950 / CFBP 7177 / CIP 109463 / NCPPB 4357 / Et1/99).